The sequence spans 156 residues: Small ribosomal subunit protein bS18c (156 aa).

Residues 1 to 54 (MYTSKQPFLKSKQPFRKSKQPFRKSKQPFRKFKKPFRKSKQPFRRRPRIGPGDR) are disordered. Residues 13-48 (QPFRKSKQPFRKSKQPFRKFKKPFRKSKQPFRRRPR) show a composition bias toward basic residues.

The protein belongs to the bacterial ribosomal protein bS18 family. Part of the 30S ribosomal subunit.

Its subcellular location is the plastid. It localises to the chloroplast. This Lolium perenne (Perennial ryegrass) protein is Small ribosomal subunit protein bS18c.